The sequence spans 328 residues: Zinc chaperone YeiR (328 aa).

9 to 17 contacts GTP; that stretch reads GFLGSGKTT. Positions 63-66 match the CXCC motif motif; that stretch reads CMCC. D155 is a GTP binding site. Residues 241 to 321 enclose the CobW C-terminal domain; that stretch reads CGWIFDADTV…WNALQSALLK (81 aa).

The protein belongs to the SIMIBI class G3E GTPase family. ZNG1 subfamily. In terms of assembly, oligomerizes in the presence of Zn(2+).

It catalyses the reaction GTP + H2O = GDP + phosphate + H(+). GTPase activity is enhanced by Zn(2+) binding. Its function is as follows. Zinc chaperone that directly transfers zinc cofactor to target proteins, thereby activating them. Zinc is transferred from the CXCC motif in the GTPase domain to the zinc binding site in target proteins in a process requiring GTP hydrolysis. The chain is Zinc chaperone YeiR (yeiR) from Escherichia coli (strain K12).